The chain runs to 834 residues: Periplasmic nitrate reductase (834 aa).

The tat-type signal signal peptide spans 1–29; the sequence is MNLTRREFAKANAAAIAAAAAGLPILVRA. A 4Fe-4S Mo/W bis-MGD-type domain is found at 41-97; that stretch reads LVWNKAPCRFCGTGCSVMVATRDGQVVATHGDIKAEVNRGINCVKGYFLSKIMYGSD. [4Fe-4S] cluster contacts are provided by Cys48, Cys51, Cys55, and Cys83. Residues Lys85, Gln152, Asn177, Cys181, 214–221, 245–249, 264–266, Met375, Gln379, Asn485, 511–512, Lys534, Asp561, and 721–730 contribute to the Mo-bis(molybdopterin guanine dinucleotide) site; these read WGSNMAEM, STFEH, QTD, SD, and TGRVLEHWHT. Substrate is bound at residue Phe797. The Mo-bis(molybdopterin guanine dinucleotide) site is built by Asn805 and Lys822.

It belongs to the prokaryotic molybdopterin-containing oxidoreductase family. NasA/NapA/NarB subfamily. As to quaternary structure, component of the periplasmic nitrate reductase NapAB complex composed of NapA and NapB. [4Fe-4S] cluster serves as cofactor. Mo-bis(molybdopterin guanine dinucleotide) is required as a cofactor. Post-translationally, predicted to be exported by the Tat system. The position of the signal peptide cleavage has not been experimentally proven.

It is found in the periplasm. The catalysed reaction is 2 Fe(II)-[cytochrome] + nitrate + 2 H(+) = 2 Fe(III)-[cytochrome] + nitrite + H2O. Functionally, catalytic subunit of the periplasmic nitrate reductase complex NapAB. Receives electrons from NapB and catalyzes the reduction of nitrate to nitrite. The chain is Periplasmic nitrate reductase from Pseudomonas aeruginosa (strain LESB58).